The sequence spans 434 residues: Aspartate--tRNA(Asp/Asn) ligase (434 aa).

Glu-167 lines the L-aspartate pocket. The interval 189–192 (QLFK) is aspartate. Arg-211 lines the L-aspartate pocket. ATP-binding positions include 211–213 (RAE), 219–221 (RHL), and Glu-357. Mg(2+) contacts are provided by Glu-357 and Ser-360. Positions 360 and 364 each coordinate L-aspartate. Residue 405-408 (GGER) participates in ATP binding.

This sequence belongs to the class-II aminoacyl-tRNA synthetase family. Type 2 subfamily. As to quaternary structure, homodimer. Mg(2+) is required as a cofactor.

It localises to the cytoplasm. The enzyme catalyses tRNA(Asx) + L-aspartate + ATP = L-aspartyl-tRNA(Asx) + AMP + diphosphate. In terms of biological role, aspartyl-tRNA synthetase with relaxed tRNA specificity since it is able to aspartylate not only its cognate tRNA(Asp) but also tRNA(Asn). Reaction proceeds in two steps: L-aspartate is first activated by ATP to form Asp-AMP and then transferred to the acceptor end of tRNA(Asp/Asn). This chain is Aspartate--tRNA(Asp/Asn) ligase, found in Haloquadratum walsbyi (strain DSM 16790 / HBSQ001).